The primary structure comprises 153 residues: Ribosome maturation factor RimP (153 aa).

Belongs to the RimP family.

Its subcellular location is the cytoplasm. Required for maturation of 30S ribosomal subunits. This is Ribosome maturation factor RimP from Vesicomyosocius okutanii subsp. Calyptogena okutanii (strain HA).